Consider the following 410-residue polypeptide: Lissencephaly-1 homolog B (410 aa).

The LisH domain maps to 7 to 39 (QRDELNRAIADYLRSNGYEEAYSTFKKEAELDV). Positions 56–82 (TSVIRLQKKVMELESKLNEAKEEITLG) form a coiled coil. WD repeat units follow at residues 106 to 147 (GHRS…RTLK), 148 to 187 (GHTD…CIRT), 190 to 229 (GHDH…CVKT), 232 to 271 (GHRE…CKAE), 274 to 333 (EHEH…CLMT), 336 to 377 (GHDN…KTLS), and 379 to 410 (HEHF…WECR).

This sequence belongs to the WD repeat LIS1/nudF family. As to quaternary structure, can self-associate. Component of the cytosolic PAF-AH (I) heterotetrameric enzyme, which is composed of PAFAH1B1 (beta), PAFAH1B2 (alpha2) and PAFAH1B3 (alpha1) subunits. The catalytic activity of the enzyme resides in the alpha1 (PAFAH1B3) and alpha2 (PAFAH1B2) subunits, whereas the beta subunit (PAFAH1B1) has regulatory activity. Trimer formation is not essential for the catalytic activity. Interacts with dynein, dynactin, nde1 and ndel1. As to expression, enriched in the photoreceptor cell layer.

It localises to the cytoplasm. The protein resides in the cytoskeleton. It is found in the microtubule organizing center. The protein localises to the centrosome. Functionally, regulatory subunit (beta subunit) of the cytosolic type I platelet-activating factor (PAF) acetylhydrolase (PAF-AH (I)), an enzyme that catalyzes the hydrolyze of the acetyl group at the sn-2 position of PAF and its analogs and participates in the PAF inactivation. Regulates the PAF-AH (I) activity in a catalytic dimer composition-dependent manner. Positively regulates the activity of the minus-end directed microtubule motor protein dynein. May enhance dynein-mediated microtubule sliding by targeting dynein to the microtubule plus end. Required for several dynein- and microtubule-dependent processes such as the maintenance of Golgi integrity, the peripheral transport of microtubule fragments and the coupling of the nucleus and centrosome. May be required for proliferation of neuronal precursors and neuronal migration. Involved in the positioning of nuclei in photoreceptor cells. The sequence is that of Lissencephaly-1 homolog B (pafah1b1b) from Danio rerio (Zebrafish).